The chain runs to 116 residues: Large ribosomal subunit protein bL19 (116 aa).

This sequence belongs to the bacterial ribosomal protein bL19 family.

This protein is located at the 30S-50S ribosomal subunit interface and may play a role in the structure and function of the aminoacyl-tRNA binding site. This Pseudomonas savastanoi pv. phaseolicola (strain 1448A / Race 6) (Pseudomonas syringae pv. phaseolicola (strain 1448A / Race 6)) protein is Large ribosomal subunit protein bL19.